The primary structure comprises 97 residues: Conotoxin Cal6.1e (97 aa).

The first 22 residues, 1-22, serve as a signal peptide directing secretion; it reads MKLTTVLIVAVLVLAACQFTVT. The segment at 23 to 49 is disordered; it reads DNSGDDTENPSLRSAGENQNPDSTKTI. Residues 23-60 constitute a propeptide that is removed on maturation; it reads DNSGDDTENPSLRSAGENQNPDSTKTITARATRARTNM. Positions 31–45 are enriched in polar residues; the sequence is NPSLRSAGENQNPDS. 3 disulfides stabilise this stretch: cysteine 71-cysteine 87, cysteine 78-cysteine 91, and cysteine 86-cysteine 96.

Belongs to the conotoxin O1 superfamily. As to expression, expressed by the venom duct.

The protein localises to the secreted. Probable neurotoxin with unknown target. Possibly targets ion channels. The polypeptide is Conotoxin Cal6.1e (Californiconus californicus (California cone)).